The following is a 261-amino-acid chain: Adenosylcobinamide-GDP ribazoletransferase (261 aa).

Transmembrane regions (helical) follow at residues 12–32 (NLFF…WVVI), 46–66 (LVGL…QLIL), 67–87 (PASI…GAFH), 120–140 (GALS…ELAL), and 199–219 (IFVL…TLWL).

Belongs to the CobS family. Requires Mg(2+) as cofactor.

The protein localises to the cell inner membrane. It catalyses the reaction alpha-ribazole + adenosylcob(III)inamide-GDP = adenosylcob(III)alamin + GMP + H(+). The catalysed reaction is alpha-ribazole 5'-phosphate + adenosylcob(III)inamide-GDP = adenosylcob(III)alamin 5'-phosphate + GMP + H(+). It functions in the pathway cofactor biosynthesis; adenosylcobalamin biosynthesis; adenosylcobalamin from cob(II)yrinate a,c-diamide: step 7/7. Joins adenosylcobinamide-GDP and alpha-ribazole to generate adenosylcobalamin (Ado-cobalamin). Also synthesizes adenosylcobalamin 5'-phosphate from adenosylcobinamide-GDP and alpha-ribazole 5'-phosphate. This Shewanella frigidimarina (strain NCIMB 400) protein is Adenosylcobinamide-GDP ribazoletransferase.